We begin with the raw amino-acid sequence, 209 residues long: N-(5'-phosphoribosyl)anthranilate isomerase (209 aa).

Belongs to the TrpF family.

It catalyses the reaction N-(5-phospho-beta-D-ribosyl)anthranilate = 1-(2-carboxyphenylamino)-1-deoxy-D-ribulose 5-phosphate. It participates in amino-acid biosynthesis; L-tryptophan biosynthesis; L-tryptophan from chorismate: step 3/5. The chain is N-(5'-phosphoribosyl)anthranilate isomerase from Pelobacter propionicus (strain DSM 2379 / NBRC 103807 / OttBd1).